A 187-amino-acid chain; its full sequence is Accessory gene regulator protein B (187 aa).

A run of 5 helical transmembrane segments spans residues 49-69, 82-102, 107-127, 143-163, and 164-184; these read LAYILNIFIFTLITNISFYLI, FWCYIESITLFIVLPLLVLHF, TLMMFLALLSVGVVIKYAPAA, YFSIIISTILFIITLFVKEPY, and TQFIQLGIIIQAITLLPIYYS.

This sequence belongs to the AgrB family.

The protein localises to the cell membrane. Functionally, essential for the production of a quorum sensing system signal molecule, the autoinducing peptide (AIP). This quorum sensing system is responsible for the regulation of the expression of virulence factor genes. Involved in the proteolytic processing of AgrD, the precursor of AIP. The sequence is that of Accessory gene regulator protein B from Staphylococcus aureus (strain MRSA252).